The primary structure comprises 1407 residues: DNA-directed RNA polymerase subunit beta' (1407 aa).

C70, C72, C85, and C88 together coordinate Zn(2+). Residues D460, D462, and D464 each coordinate Mg(2+). Residues C814, C888, C895, and C898 each contribute to the Zn(2+) site. Residue K972 is modified to N6-acetyllysine.

The protein belongs to the RNA polymerase beta' chain family. As to quaternary structure, the RNAP catalytic core consists of 2 alpha, 1 beta, 1 beta' and 1 omega subunit. When a sigma factor is associated with the core the holoenzyme is formed, which can initiate transcription. Mg(2+) is required as a cofactor. The cofactor is Zn(2+).

The enzyme catalyses RNA(n) + a ribonucleoside 5'-triphosphate = RNA(n+1) + diphosphate. Functionally, DNA-dependent RNA polymerase catalyzes the transcription of DNA into RNA using the four ribonucleoside triphosphates as substrates. The protein is DNA-directed RNA polymerase subunit beta' of Shigella dysenteriae serotype 1 (strain Sd197).